The sequence spans 298 residues: Ankyrin repeat domain-containing protein 29 (298 aa).

ANK repeat units follow at residues 8 to 38 (PLAN…DVDC), 42 to 71 (YGTT…DINL), 75 to 104 (TGST…STEF), 108 to 137 (DGGT…NVHD), 141 to 170 (DGAT…KVNQ), 174 to 203 (DGTA…DRDA), 207 to 236 (DGST…SLGI), and 239 to 268 (NGST…DPAL).

This chain is Ankyrin repeat domain-containing protein 29 (ankrd29), found in Danio rerio (Zebrafish).